Here is a 103-residue protein sequence, read N- to C-terminus: Movement protein TGB2 (103 aa).

At 1–8 the chain is on the cytoplasmic side; the sequence is MSFAPPPD. Residues 9-29 form a helical membrane-spanning segment; sequence YSKIYLALGCGLGLGFVVYAS. Residues 30-70 lie on the Lumenal side of the membrane; sequence RVNHLPHVGDNTHNLPHGGQYCDGNKRVLYSGPKSGSSPTN. A helical transmembrane segment spans residues 71–91; sequence NLWPFITVIALTLAILLTSCP. Over 92 to 103 the chain is Cytoplasmic; it reads RRRVCIRCSQHH.

It belongs to the Tymovirales TGBp2 protein family.

It localises to the host endoplasmic reticulum membrane. Its function is as follows. Plays a role in viral cell-to-cell propagation, by facilitating genome transport to neighboring plant cells through plasmosdesmata,. The polypeptide is Movement protein TGB2 (Allium cepa var. aggregatum (Shallot)).